The following is a 402-amino-acid chain: Multidrug resistance protein MdtG (402 aa).

11 helical membrane passes run 14–34 (LYIVWFGCFLTGAGFSLIMPF), 52–72 (LWTGVAFSITFLFSAIAAPFW), 90–110 (LGMAIVMVLIGFAQNIWQLLI), 113–133 (ALLGVLGGFVPNANALIATQV), 149–169 (AVSGALIGPLIGGILADLYGL), 171–191 (PVFFITAAVLFICFIVTLFFV), 219–239 (VICLFFTTMIIQVATGSVTPI), 254–274 (LAFISGVIASVPGIAALISAP), 288–308 (VLIFTLGLSIFMLIPMALVSN), 318–338 (LLGAVNAAMLPAVQTLILYNI), and 376–396 (AVFYFTAAVVFFNLIYSWISF).

Belongs to the major facilitator superfamily. DHA1 family. MdtG (TC 2.A.1.2.20) subfamily.

The protein localises to the cell inner membrane. In Proteus mirabilis (strain HI4320), this protein is Multidrug resistance protein MdtG.